We begin with the raw amino-acid sequence, 349 residues long: B3 domain-containing protein At5g24050 (349 aa).

Positions 240–341 form a DNA-binding region, TF-B3; that stretch reads FNNLLRNDFL…ILCFAMEQSS (102 aa).

The protein resides in the nucleus. In Arabidopsis thaliana (Mouse-ear cress), this protein is B3 domain-containing protein At5g24050.